Reading from the N-terminus, the 187-residue chain is Probable cobalt-precorrin-6B C(15)-methyltransferase (decarboxylating) (187 aa).

S-adenosyl-L-methionine is bound by residues Thr15, 39 to 43 (GSCTG), Glu60, and Ala89.

Belongs to the methyltransferase superfamily. Archaeal-type CbiT family.

The catalysed reaction is Co-precorrin-6B + S-adenosyl-L-methionine = Co-precorrin-7 + S-adenosyl-L-homocysteine + CO2. The protein operates within cofactor biosynthesis; adenosylcobalamin biosynthesis; cob(II)yrinate a,c-diamide from sirohydrochlorin (anaerobic route): step 8/10. Catalyzes the methylation of C-15 in cobalt-precorrin-6B followed by the decarboxylation of C-12 to form cobalt-precorrin-7. In Halobacterium salinarum (strain ATCC 700922 / JCM 11081 / NRC-1) (Halobacterium halobium), this protein is Probable cobalt-precorrin-6B C(15)-methyltransferase (decarboxylating).